We begin with the raw amino-acid sequence, 458 residues long: A-type ATP synthase subunit B (458 aa).

The protein belongs to the ATPase alpha/beta chains family. In terms of assembly, has multiple subunits with at least A(3), B(3), C, D, E, F, H, I and proteolipid K(x).

It is found in the cell membrane. In terms of biological role, component of the A-type ATP synthase that produces ATP from ADP in the presence of a proton gradient across the membrane. The B chain is a regulatory subunit. The sequence is that of A-type ATP synthase subunit B from Methanocorpusculum labreanum (strain ATCC 43576 / DSM 4855 / Z).